The following is a 396-amino-acid chain: NADH-quinone oxidoreductase subunit D 1 (396 aa).

The protein belongs to the complex I 49 kDa subunit family. In terms of assembly, NDH-1 is composed of 14 different subunits. Subunits NuoB, C, D, E, F, and G constitute the peripheral sector of the complex.

Its subcellular location is the cell inner membrane. It carries out the reaction a quinone + NADH + 5 H(+)(in) = a quinol + NAD(+) + 4 H(+)(out). NDH-1 shuttles electrons from NADH, via FMN and iron-sulfur (Fe-S) centers, to quinones in the respiratory chain. The immediate electron acceptor for the enzyme in this species is believed to be ubiquinone. Couples the redox reaction to proton translocation (for every two electrons transferred, four hydrogen ions are translocated across the cytoplasmic membrane), and thus conserves the redox energy in a proton gradient. This chain is NADH-quinone oxidoreductase subunit D 1, found in Rhizobium meliloti (strain 1021) (Ensifer meliloti).